The primary structure comprises 285 residues: Acrosomal protein SP-10 (285 aa).

The first 21 residues, 1-21 (MNMFLLLMSLYLLGSARGTSG), serve as a signal peptide directing secretion. Residues 64 to 200 (TLSEHGSSEH…GEQPSGAPIS (137 aa)) are disordered. 19 repeat units span residues 66–70 (SEHGS), 71–75 (SEHGS), 85–89 (PGEHA), 91–95 (SEHAS), 110–114 (VGEQP), 115–119 (SGEQP), 120–124 (SGEHL), 125–129 (SGEQS), 130–134 (LGEHA), 135–139 (SGEQP), 145–149 (SGEHA), 150–154 (SGEQP), 155–159 (SGEHA), 160–164 (SGEQP), 165–169 (SGEQP), 170–174 (SGEHA), 175–179 (SGEQS), 180–184 (LGEHA), and 190–194 (SGEQP). Residues 66 to 95 (SEHGSSEHGSREHTVAEHTPGEHAESEHAS) are 3 X 5 AA repeats of S-E-H-[GA]-A. The segment covering 69–95 (GSSEHGSREHTVAEHTPGEHAESEHAS) has biased composition (basic and acidic residues). Positions 85-184 (PGEHAESEHA…SGEQSLGEHA (100 aa)) are 7 X 5 AA repeats of S-G-E-H-[AL]. The 9 X 5 AA repeats of [SV]-G-E-Q-[PSA] stretch occupies residues 110–194 (VGEQPSGEQP…LSEKPSGEQP (85 aa)). Residue Asn278 is glycosylated (N-linked (GlcNAc...) asparagine).

Testis.

It is found in the cytoplasmic vesicle. It localises to the secretory vesicle. The protein localises to the acrosome. The polypeptide is Acrosomal protein SP-10 (ACRV1) (Papio hamadryas (Hamadryas baboon)).